The chain runs to 559 residues: Nuclear envelope integral membrane protein (559 aa).

The signal sequence occupies residues 1 to 15 (MRLLTLALLVAGSLA). N-linked (GlcNAc...) asparagine glycans are attached at residues asparagine 67, asparagine 81, and asparagine 114. 5 helical membrane passes run 164–184 (YTSGCSFGLLASLLLVAFIVW), 192–212 (IGVPILIGGWSVSLYMLHFAW), 218–238 (IMIEYQKYVIGYFATVLLISM), 267–287 (LIYFSVQMVEVSTGTIGALII), and 290–310 (ICRGFLFAGIRWYFVGLKAVW). 2 N-linked (GlcNAc...) asparagine glycosylation sites follow: asparagine 408 and asparagine 465. 2 disordered regions span residues 475–494 (RRDSTPRHGNFQSEHRPRMP) and 510–559 (KNGR…DADE). Polar residues predominate over residues 517–526 (PSSSTASGMT). The segment covering 530–539 (YMRKARRIDA) has biased composition (basic and acidic residues).

The protein belongs to the NEMP family.

It localises to the nucleus inner membrane. In terms of biological role, contributes to nuclear envelope stiffness in germ cells. Required for fertility. The chain is Nuclear envelope integral membrane protein from Caenorhabditis elegans.